The chain runs to 259 residues: Complement factor D (259 aa).

Residues 1–21 (MADRSLHLVVLILLGTALCAA) form the signal peptide. The propeptide at 22–26 (QPRGR) is activation peptide. Residues 27–254 (ILRGQEAPSH…YVAWIDGVMA (228 aa)) form the Peptidase S1 domain. A disulfide bond links cysteine 52 and cysteine 68. Residues histidine 67 and aspartate 115 each act as charge relay system in the active site. 3 disulfides stabilise this stretch: cysteine 149–cysteine 215, cysteine 180–cysteine 196, and cysteine 205–cysteine 230. Catalysis depends on serine 209, which acts as the Charge relay system. Residues 224 to 228 (TSGSR) are self-inhibitor loop.

The protein belongs to the peptidase S1 family. Post-translationally, CFD is activated by the removal of 5 residues at the N-terminus, named activation peptide, by the MASP-3 isoform of MASP1.

Its subcellular location is the secreted. The catalysed reaction is Selective cleavage of Arg-|-Lys bond in complement factor B when in complex with complement subcomponent C3b or with cobra venom factor.. With respect to regulation, circulates in plasma in a mature but self-inhibited form. Activated by factor B (CFB), which displaces the self-inhibition loop. Associates with CFB complexed with complement C3b. Functionally, serine protease that initiates the alternative pathway of the complement system, a cascade of proteins that leads to phagocytosis and breakdown of pathogens and signaling that strengthens the adaptive immune system. In contrast to other complement pathways (classical, lectin and GZMK) that are directly activated by pathogens or antigen-antibody complexes, the alternative complement pathway is initiated by the spontaneous hydrolysis of complement C3. The alternative complement pathway acts as an amplification loop that enhances complement activation by mediating the formation of C3 and C5 convertases. Activated CFD cleaves factor B (CFB) when the latter is complexed with complement C3b, activating the C3 convertase of the alternative pathway. This chain is Complement factor D (CFD), found in Bos taurus (Bovine).